The primary structure comprises 327 residues: DNA-directed RNA polymerase subunit alpha (327 aa).

Positions 1–233 are alpha N-terminal domain (alpha-NTD); that stretch reads MVREKVKVST…NLFIPFLHVE (233 aa). Positions 267 to 327 are alpha C-terminal domain (alpha-CTD); sequence LAFQYIFIDQ…KKILDILEKK (61 aa).

It belongs to the RNA polymerase alpha chain family. As to quaternary structure, in plastids the minimal PEP RNA polymerase catalytic core is composed of four subunits: alpha, beta, beta', and beta''. When a (nuclear-encoded) sigma factor is associated with the core the holoenzyme is formed, which can initiate transcription.

It is found in the plastid. It localises to the chloroplast. The catalysed reaction is RNA(n) + a ribonucleoside 5'-triphosphate = RNA(n+1) + diphosphate. Functionally, DNA-dependent RNA polymerase catalyzes the transcription of DNA into RNA using the four ribonucleoside triphosphates as substrates. This chain is DNA-directed RNA polymerase subunit alpha, found in Nasturtium officinale (Watercress).